The chain runs to 279 residues: Large ribosomal subunit protein uL2 (279 aa).

2 disordered regions span residues 32 to 53 and 225 to 279; these read SLLRPLPKHGGRNNAGRITTRH and AMNP…KKRK. A compositionally biased stretch (basic and acidic residues) spans 253–268; that stretch reads KEGRTRHINKPSDKLI. Residues 269–279 are compositionally biased toward basic residues; that stretch reads VRRRNAGKKRK.

The protein belongs to the universal ribosomal protein uL2 family. In terms of assembly, part of the 50S ribosomal subunit. Forms a bridge to the 30S subunit in the 70S ribosome.

In terms of biological role, one of the primary rRNA binding proteins. Required for association of the 30S and 50S subunits to form the 70S ribosome, for tRNA binding and peptide bond formation. It has been suggested to have peptidyltransferase activity; this is somewhat controversial. Makes several contacts with the 16S rRNA in the 70S ribosome. In Clavibacter michiganensis subsp. michiganensis (strain NCPPB 382), this protein is Large ribosomal subunit protein uL2.